We begin with the raw amino-acid sequence, 352 residues long: C-C chemokine receptor type 5 (352 aa).

Residues Met-1–Ala-30 are Extracellular-facing. Position 3 is a sulfotyrosine (Tyr-3). Residues Ser-6 and Ser-7 are each glycosylated (O-linked (GalNAc...) serine). Sulfotyrosine occurs at positions 10, 14, and 15. Intrachain disulfides connect Cys-20–Cys-269 and Cys-101–Cys-178. The helical transmembrane segment at Arg-31–Cys-58 threads the bilayer. The Cytoplasmic segment spans residues Lys-59 to Tyr-68. The chain crosses the membrane as a helical span at residues Leu-69 to Tyr-89. The Extracellular portion of the chain corresponds to Ala-90–Gln-102. Residues Leu-103–Ile-124 form a helical membrane-spanning segment. At Asp-125–Thr-141 the chain is on the cytoplasmic side. Residues Val-142–Phe-166 traverse the membrane as a helical segment. The Extracellular portion of the chain corresponds to Thr-167–Ile-198. A helical membrane pass occupies residues Val-199–Leu-218. Residues Lys-219–Arg-235 lie on the Cytoplasmic side of the membrane. A helical membrane pass occupies residues Leu-236–Phe-260. Residues Gln-261–Gln-277 lie on the Extracellular side of the membrane. A helical membrane pass occupies residues Ala-278–Gly-301. The Cytoplasmic portion of the chain corresponds to Glu-302 to Leu-352. S-palmitoyl cysteine attachment occurs at residues Cys-321, Cys-323, and Cys-324. A phosphoserine; by BARK1 mark is found at Ser-336, Ser-337, Ser-342, and Ser-349.

The protein belongs to the G-protein coupled receptor 1 family. As to quaternary structure, interacts with PRAF2. Efficient ligand binding to CCL3/MIP-1alpha and CCL4/MIP-1beta requires sulfation, O-glycosylation and sialic acid modifications. Glycosylation on Ser-6 is required for efficient binding of CCL4. Interacts with GRK2. Interacts with ARRB1 and ARRB2. Interacts with CNIH4. Interacts with S100A4; this interaction stimulates T-lymphocyte chemotaxis. Post-translationally, sulfated on at least 2 of the N-terminal tyrosines. Sulfation is required for efficient binding of the chemokines, CCL3 and CCL4. In terms of processing, palmitoylation in the C-terminal is important for cell surface expression. Phosphorylation on serine residues in the C-terminal is stimulated by binding CC chemokines especially by APO-RANTES. Post-translationally, O-glycosylated, but not N-glycosylated. Ser-6 appears to be the major site even if Ser-7 may be also O-glycosylated. Also sialylated glycans present which contribute to chemokine binding. Thr-16 and Ser-17 may also be glycosylated and, if so, with small moieties such as a T-antigen.

It localises to the cell membrane. Its function is as follows. Receptor for a number of inflammatory CC-chemokines including CCL3/MIP-1-alpha, CCL4/MIP-1-beta and RANTES and subsequently transduces a signal by increasing the intracellular calcium ion level. May play a role in the control of granulocytic lineage proliferation or differentiation. Participates in T-lymphocyte migration to the infection site by acting as a chemotactic receptor. The sequence is that of C-C chemokine receptor type 5 (CCR5) from Pongo abelii (Sumatran orangutan).